The sequence spans 512 residues: Bifunctional purine biosynthesis protein PurH (512 aa).

Residues 1 to 144 (MKRALVSVSD…KNYRDVVVVV (144 aa)) form the MGS-like domain.

The protein belongs to the PurH family.

It catalyses the reaction (6R)-10-formyltetrahydrofolate + 5-amino-1-(5-phospho-beta-D-ribosyl)imidazole-4-carboxamide = 5-formamido-1-(5-phospho-D-ribosyl)imidazole-4-carboxamide + (6S)-5,6,7,8-tetrahydrofolate. The catalysed reaction is IMP + H2O = 5-formamido-1-(5-phospho-D-ribosyl)imidazole-4-carboxamide. It functions in the pathway purine metabolism; IMP biosynthesis via de novo pathway; 5-formamido-1-(5-phospho-D-ribosyl)imidazole-4-carboxamide from 5-amino-1-(5-phospho-D-ribosyl)imidazole-4-carboxamide (10-formyl THF route): step 1/1. Its pathway is purine metabolism; IMP biosynthesis via de novo pathway; IMP from 5-formamido-1-(5-phospho-D-ribosyl)imidazole-4-carboxamide: step 1/1. The sequence is that of Bifunctional purine biosynthesis protein PurH from Ligilactobacillus salivarius (strain UCC118) (Lactobacillus salivarius).